The primary structure comprises 373 residues: UDP-N-acetylglucosamine--N-acetylmuramyl-(pentapeptide) pyrophosphoryl-undecaprenol N-acetylglucosamine transferase (373 aa).

Residues 10–12 (TGG), N124, R166, S196, and Q301 contribute to the UDP-N-acetyl-alpha-D-glucosamine site.

It belongs to the glycosyltransferase 28 family. MurG subfamily.

The protein resides in the cell membrane. It catalyses the reaction di-trans,octa-cis-undecaprenyl diphospho-N-acetyl-alpha-D-muramoyl-L-alanyl-D-glutamyl-meso-2,6-diaminopimeloyl-D-alanyl-D-alanine + UDP-N-acetyl-alpha-D-glucosamine = di-trans,octa-cis-undecaprenyl diphospho-[N-acetyl-alpha-D-glucosaminyl-(1-&gt;4)]-N-acetyl-alpha-D-muramoyl-L-alanyl-D-glutamyl-meso-2,6-diaminopimeloyl-D-alanyl-D-alanine + UDP + H(+). It functions in the pathway cell wall biogenesis; peptidoglycan biosynthesis. Cell wall formation. Catalyzes the transfer of a GlcNAc subunit on undecaprenyl-pyrophosphoryl-MurNAc-pentapeptide (lipid intermediate I) to form undecaprenyl-pyrophosphoryl-MurNAc-(pentapeptide)GlcNAc (lipid intermediate II). The polypeptide is UDP-N-acetylglucosamine--N-acetylmuramyl-(pentapeptide) pyrophosphoryl-undecaprenol N-acetylglucosamine transferase (Desulforudis audaxviator (strain MP104C)).